The sequence spans 127 residues: Large ribosomal subunit protein bL17 (127 aa).

It belongs to the bacterial ribosomal protein bL17 family. In terms of assembly, part of the 50S ribosomal subunit. Contacts protein L32.

The polypeptide is Large ribosomal subunit protein bL17 (Aeromonas hydrophila subsp. hydrophila (strain ATCC 7966 / DSM 30187 / BCRC 13018 / CCUG 14551 / JCM 1027 / KCTC 2358 / NCIMB 9240 / NCTC 8049)).